The sequence spans 168 residues: Peptide deformylase (168 aa).

The Fe cation site is built by Cys-91 and His-133. Residue Glu-134 is part of the active site. Residue His-137 participates in Fe cation binding.

This sequence belongs to the polypeptide deformylase family. Requires Fe(2+) as cofactor.

It catalyses the reaction N-terminal N-formyl-L-methionyl-[peptide] + H2O = N-terminal L-methionyl-[peptide] + formate. In terms of biological role, removes the formyl group from the N-terminal Met of newly synthesized proteins. Requires at least a dipeptide for an efficient rate of reaction. N-terminal L-methionine is a prerequisite for activity but the enzyme has broad specificity at other positions. The polypeptide is Peptide deformylase (Endomicrobium trichonymphae).